Here is a 208-residue protein sequence, read N- to C-terminus: ATP-dependent Clp protease proteolytic subunit 1 (208 aa).

The active-site Nucleophile is S108. H133 is an active-site residue.

Belongs to the peptidase S14 family. As to quaternary structure, fourteen ClpP subunits assemble into 2 heptameric rings which stack back to back to give a disk-like structure with a central cavity, resembling the structure of eukaryotic proteasomes.

The protein resides in the cytoplasm. It catalyses the reaction Hydrolysis of proteins to small peptides in the presence of ATP and magnesium. alpha-casein is the usual test substrate. In the absence of ATP, only oligopeptides shorter than five residues are hydrolyzed (such as succinyl-Leu-Tyr-|-NHMec, and Leu-Tyr-Leu-|-Tyr-Trp, in which cleavage of the -Tyr-|-Leu- and -Tyr-|-Trp bonds also occurs).. Functionally, cleaves peptides in various proteins in a process that requires ATP hydrolysis. Has a chymotrypsin-like activity. Plays a major role in the degradation of misfolded proteins. This Corynebacterium glutamicum (strain ATCC 13032 / DSM 20300 / JCM 1318 / BCRC 11384 / CCUG 27702 / LMG 3730 / NBRC 12168 / NCIMB 10025 / NRRL B-2784 / 534) protein is ATP-dependent Clp protease proteolytic subunit 1.